The sequence spans 246 residues: 3-deoxy-manno-octulosonate cytidylyltransferase (246 aa).

It belongs to the KdsB family.

Its subcellular location is the cytoplasm. It carries out the reaction 3-deoxy-alpha-D-manno-oct-2-ulosonate + CTP = CMP-3-deoxy-beta-D-manno-octulosonate + diphosphate. It participates in nucleotide-sugar biosynthesis; CMP-3-deoxy-D-manno-octulosonate biosynthesis; CMP-3-deoxy-D-manno-octulosonate from 3-deoxy-D-manno-octulosonate and CTP: step 1/1. The protein operates within bacterial outer membrane biogenesis; lipopolysaccharide biosynthesis. In terms of biological role, activates KDO (a required 8-carbon sugar) for incorporation into bacterial lipopolysaccharide in Gram-negative bacteria. In Rickettsia conorii (strain ATCC VR-613 / Malish 7), this protein is 3-deoxy-manno-octulosonate cytidylyltransferase.